The following is a 670-amino-acid chain: MEVSETDEHLTRLNQARDIVKTDQSLFPEIVRNILSVANYSDIRYKKWMANFLWFGFSSKNVKFEQKLDLAVTCLDTIVSLYAVDNEEVKKDVISCSCTIYPLVFLHCCTSPNDSSTWDTLTKLKNEIINDFDKGNKPLLISCIKFISCVILTQVPGIRDPRLVTKSDVSLSKVPTHHPFINSNILRIEANDLIEKIFSILFSDSLNVLYITSVLNILPVLVKRRKELAPKIIGSLLEFHLPNPKDEIELSNESKLAIRCIEKNLKLILLHLAKSTGASSSSVEKIHAYLSGQIYHTKVDESLKKRQYEGNISAASKRVKSSAVQSLVERMQPQLSSHDGLQNNPLISIFASQTAINPLANFDVTSIPVEVATEIVLTSLLKIDKNYFHQQINMLRERVRSLSEPESLGLDQQVDEDEDEDYEPPEVDVQTINASVEREAARLEGSAPSNVVTDAFELPTPDSLSPMAILEYFHGALSRLFDYAPQFERSIVSSSNLQNLTLENVDNTVWDKRHWAILLPRLCTRGLLNYQPVTSGEESGDASFTLSSFVRGQLFTYVASNWRSSTNLILNWLSEEWYNDRLMLENPDCHEYEDVKWEGPQYEKWALKVIDSILPYLEAKDKVFMIFMSELPELTDAIVDKIKFVCLDPDKTKLGFMTFQYLIMFRLTCT.

It to yeast PTA1. In terms of assembly, component of the cleavage and polyadenylation factor (CPF) complex, which is composed of cft1, cft2, ysh1, pta1, swd2, pfs2, dis2, yth1, ssu72, and fip1.

The protein localises to the nucleus. Its function is as follows. Component of the cleavage and polyadenylation factor (CPF) complex, which plays a key role in polyadenylation-dependent pre-mRNA 3'-end formation and cooperates with cleavage factors including the CFIA complex and NAB4/CFIB. This chain is mRNA cleavage and polyadenylation specificity factor complex subunit pta1 (pta1), found in Schizosaccharomyces pombe (strain 972 / ATCC 24843) (Fission yeast).